The sequence spans 669 residues: NADH-ubiquinone oxidoreductase chain 5 (669 aa).

14 helical membrane-spanning segments follow: residues 3–23 (LLIV…GRFL), 40–60 (SILS…CYLR), 76–96 (FLFD…SSLV), 113–133 (FMCY…GDNF), 136–156 (LFLG…FWFT), 217–237 (AISL…AQIG), 250–270 (TPVS…FMIA), 283–303 (LIVI…TGIL), 319–339 (LGYM…FHLM), 340–360 (NHAF…HAMS), 375–395 (FPLT…FPFL), 417–437 (NFAF…SFRL), 461–481 (IPMA…GYLA), and 619–639 (GFVY…VTFF).

This sequence belongs to the complex I subunit 5 family. As to quaternary structure, complex I is composed of at least 49 different subunits.

It is found in the mitochondrion inner membrane. The catalysed reaction is a ubiquinone + NADH + 5 H(+)(in) = a ubiquinol + NAD(+) + 4 H(+)(out). In terms of biological role, core subunit of the mitochondrial membrane respiratory chain NADH dehydrogenase (Complex I) that is believed to belong to the minimal assembly required for catalysis. Complex I functions in the transfer of electrons from NADH to the respiratory chain. The immediate electron acceptor for the enzyme is believed to be ubiquinone. The sequence is that of NADH-ubiquinone oxidoreductase chain 5 (ND5) from Arabidopsis thaliana (Mouse-ear cress).